The sequence spans 150 residues: Large ribosomal subunit protein uL15 (150 aa).

Residues 1–52 (MITLNTLKDSTRKRKPRKRVGRGIGSKHGKTCGRGEKGAGARSGYKRRLGKE) are disordered. The segment covering 11–31 (TRKRKPRKRVGRGIGSKHGKT) has biased composition (basic residues).

Belongs to the universal ribosomal protein uL15 family. Part of the 50S ribosomal subunit.

In terms of biological role, binds to the 23S rRNA. In Protochlamydia amoebophila (strain UWE25), this protein is Large ribosomal subunit protein uL15.